A 103-amino-acid chain; its full sequence is Large ribosomal subunit protein bL21 (103 aa).

This sequence belongs to the bacterial ribosomal protein bL21 family. As to quaternary structure, part of the 50S ribosomal subunit. Contacts protein L20.

This protein binds to 23S rRNA in the presence of protein L20. The sequence is that of Large ribosomal subunit protein bL21 from Shigella sonnei (strain Ss046).